The following is a 308-amino-acid chain: UDP-N-acetylenolpyruvoylglucosamine reductase (308 aa).

The region spanning 32–196 is the FAD-binding PCMH-type domain; the sequence is VGGPAARLYK…ISAKLQLSPG (165 aa). Residue Arg176 is part of the active site. The active-site Proton donor is the Ser225. Residue Glu296 is part of the active site.

Belongs to the MurB family. FAD is required as a cofactor.

Its subcellular location is the cytoplasm. It carries out the reaction UDP-N-acetyl-alpha-D-muramate + NADP(+) = UDP-N-acetyl-3-O-(1-carboxyvinyl)-alpha-D-glucosamine + NADPH + H(+). It participates in cell wall biogenesis; peptidoglycan biosynthesis. In terms of biological role, cell wall formation. This is UDP-N-acetylenolpyruvoylglucosamine reductase from Legionella pneumophila (strain Lens).